The following is a 187-amino-acid chain: Small monomeric GTPase RhbA (187 aa).

Residues Ser17, Val18, Gly19, Lys20, Ser21, Ser22, Val33, and Glu34 each coordinate GDP. Ser17 is a binding site for GTP. GTP-binding residues include Gly19, Lys20, Ser21, Ser22, and Val33. Ser21 is a binding site for Mg(2+). Residues Tyr36, Thr39, Asn120, Asp123, and Ala152 each coordinate GTP. Residues 36 to 44 (YYPTIENTF) carry the Effector region motif. Thr39 contributes to the Mg(2+) binding site. The GDP site is built by Asn120, Asp123, and Ala152. Cys184 carries S-farnesyl cysteine lipidation.

This sequence belongs to the small GTPase superfamily. Rheb family. In terms of processing, farnesylation is important for efficiently activating mTORC1-mediated signaling.

It is found in the cell membrane. The catalysed reaction is GTP + H2O = GDP + phosphate + H(+). With respect to regulation, alternates between an inactive form bound to GDP and an active form bound to GTP. Its function is as follows. Small GTPase that acts as an allosteric activator of the canonical TOR pathway, an evolutionarily conserved central nutrient sensor that stimulates anabolic reactions and macromolecule biosynthesis to promote cellular biomass generation and growth. Plays a role in virulence. This is Small monomeric GTPase RhbA from Aspergillus fumigatus (strain ATCC MYA-4609 / CBS 101355 / FGSC A1100 / Af293) (Neosartorya fumigata).